A 266-amino-acid polypeptide reads, in one-letter code: Protein crossbronx-like (266 aa).

The UBC core domain occupies Lys15 to Asn178.

The protein belongs to the ubiquitin-conjugating enzyme family. FTS subfamily.

This Drosophila erecta (Fruit fly) protein is Protein crossbronx-like.